The chain runs to 251 residues: Alanyl-tRNA editing protein AlaX-M (251 aa).

Zn(2+) contacts are provided by His107, His111, Cys210, and His214.

The protein belongs to the class-II aminoacyl-tRNA synthetase family. Editing domain AlaX-M subfamily. Zn(2+) is required as a cofactor.

It localises to the cytoplasm. Functionally, functions in trans to edit the amino acid moiety from mischarged Ser-tRNA(Ala). Recognition depends, at least in part, on the acceptor stem of tRNA(Ala). In Methanosarcina mazei (strain ATCC BAA-159 / DSM 3647 / Goe1 / Go1 / JCM 11833 / OCM 88) (Methanosarcina frisia), this protein is Alanyl-tRNA editing protein AlaX-M (alaXM).